The primary structure comprises 594 residues: Isocitrate dehydrogenase kinase/phosphatase (594 aa).

Residues 315 to 321 (APGIRGM) and Lys336 contribute to the ATP site. Asp371 is a catalytic residue.

The protein belongs to the AceK family.

It localises to the cytoplasm. It carries out the reaction L-seryl-[isocitrate dehydrogenase] + ATP = O-phospho-L-seryl-[isocitrate dehydrogenase] + ADP + H(+). Functionally, bifunctional enzyme which can phosphorylate or dephosphorylate isocitrate dehydrogenase (IDH) on a specific serine residue. This is a regulatory mechanism which enables bacteria to bypass the Krebs cycle via the glyoxylate shunt in response to the source of carbon. When bacteria are grown on glucose, IDH is fully active and unphosphorylated, but when grown on acetate or ethanol, the activity of IDH declines drastically concomitant with its phosphorylation. The chain is Isocitrate dehydrogenase kinase/phosphatase from Klebsiella pneumoniae subsp. pneumoniae (strain ATCC 700721 / MGH 78578).